The chain runs to 435 residues: Enolase (435 aa).

Gln163 lines the (2R)-2-phosphoglycerate pocket. Glu205 serves as the catalytic Proton donor. Residues Asp243, Glu292, and Asp319 each contribute to the Mg(2+) site. The (2R)-2-phosphoglycerate site is built by Lys344, Arg373, Ser374, and Lys395. Lys344 serves as the catalytic Proton acceptor.

This sequence belongs to the enolase family. In terms of assembly, homooctamer, a tetramer of homodimers. Mg(2+) is required as a cofactor.

Its subcellular location is the cytoplasm. It localises to the secreted. It is found in the cell surface. The protein localises to the cell wall. The enzyme catalyses (2R)-2-phosphoglycerate = phosphoenolpyruvate + H2O. It functions in the pathway carbohydrate degradation; glycolysis; pyruvate from D-glyceraldehyde 3-phosphate: step 4/5. Functionally, catalyzes the reversible conversion of 2-phosphoglycerate (2-PG) into phosphoenolpyruvate (PEP). It is essential for the degradation of carbohydrates via glycolysis. In terms of biological role, 'Moonlights' as a plasminogen receptor. Binds plasminogen and more weakly plasmin when expressed on the bacterial cell surface; probably has more than one plasmin(ogen) binding site, may bind via Lys residues. Plasminogen binding potentially allows the bacterium to acquire surface-associated proteolytic activity, which in turn contributes to tissue invasion and virulence. The sequence is that of Enolase from Streptococcus pyogenes serotype M6 (strain ATCC BAA-946 / MGAS10394).